The sequence spans 460 residues: ATP synthase subunit beta (460 aa).

ATP is bound at residue 150 to 157 (GGAGVGKT).

Belongs to the ATPase alpha/beta chains family. As to quaternary structure, F-type ATPases have 2 components, CF(1) - the catalytic core - and CF(0) - the membrane proton channel. CF(1) has five subunits: alpha(3), beta(3), gamma(1), delta(1), epsilon(1). CF(0) has three main subunits: a(1), b(2) and c(9-12). The alpha and beta chains form an alternating ring which encloses part of the gamma chain. CF(1) is attached to CF(0) by a central stalk formed by the gamma and epsilon chains, while a peripheral stalk is formed by the delta and b chains.

The protein resides in the cell inner membrane. The catalysed reaction is ATP + H2O + 4 H(+)(in) = ADP + phosphate + 5 H(+)(out). Its function is as follows. Produces ATP from ADP in the presence of a proton gradient across the membrane. The catalytic sites are hosted primarily by the beta subunits. This is ATP synthase subunit beta from Erwinia tasmaniensis (strain DSM 17950 / CFBP 7177 / CIP 109463 / NCPPB 4357 / Et1/99).